The primary structure comprises 20 residues: Cicerin (20 aa).

Positions 1–20 are disordered; the sequence is ARCENFADSYRQPPISSSQT.

In terms of biological role, has antifungal activity against B.cinerea, F.oxysporum and M.arachidicola. Inhibits cell-free translation in rabbit reticulocyte lysate system. This chain is Cicerin, found in Cicer arietinum (Chickpea).